A 247-amino-acid chain; its full sequence is Coproheme decarboxylase (247 aa).

Fe-coproporphyrin III contacts are provided by residues arginine 129, 143 to 147 (YPMDK), histidine 170, glutamine 183, and serine 221. The active site involves tyrosine 143.

It belongs to the ChdC family. Type 1 subfamily. It depends on Fe-coproporphyrin III as a cofactor.

The enzyme catalyses Fe-coproporphyrin III + 2 H2O2 + 2 H(+) = heme b + 2 CO2 + 4 H2O. The catalysed reaction is Fe-coproporphyrin III + H2O2 + H(+) = harderoheme III + CO2 + 2 H2O. It catalyses the reaction harderoheme III + H2O2 + H(+) = heme b + CO2 + 2 H2O. It functions in the pathway porphyrin-containing compound metabolism; protoheme biosynthesis. Its function is as follows. Involved in coproporphyrin-dependent heme b biosynthesis. Catalyzes the decarboxylation of Fe-coproporphyrin III (coproheme) to heme b (protoheme IX), the last step of the pathway. The reaction occurs in a stepwise manner with a three-propionate intermediate. In Bacillus mycoides (strain KBAB4) (Bacillus weihenstephanensis), this protein is Coproheme decarboxylase.